A 383-amino-acid polypeptide reads, in one-letter code: Dimethylsulfoniopropionate lyase 3 (383 aa).

Belongs to the aspartate/glutamate racemases family. ALMA1 subfamily. Homotetramer.

The enzyme catalyses S,S-dimethyl-beta-propiothetin = acrylate + dimethyl sulfide + H(+). Its function is as follows. Mediates cleavage of dimethylsulfoniopropionate (DMSP) into dimethyl sulfide (DMS) and acrylate. DMS is the principal form by which sulfur is transported from oceans to the atmosphere and is a key component of the ocean sulfur cycle. The chain is Dimethylsulfoniopropionate lyase 3 from Emiliania huxleyi (strain CCMP1516).